Here is a 293-residue protein sequence, read N- to C-terminus: MPEPIQSGDDALRVSVLSEALPYIQRFSGRRIVIKYGGAAMAHAELREAVFRDLALLACVGVQPVVVHGGGPEINQWLKRLEIPAEFRDGLRVTDADTMDVVEMVLVGRVNKQIVNGLNQLGTRAVGLSGSDGSLVEARPWGDGSHGLVGDVARVNPDVLEPLLERGYVPVISSVAATPGDGRAHNINADTVAGELAAALEAEKLILLTDTPGILRDRDNPNSLIRKLRLSEARQLIDDGVVAGGMTPKTECCIRALAQGVSAAHIVDGRVPHALLLEVFTDAGIGTMVVGRG.

Residues 70–71 (GG), R92, and N186 contribute to the substrate site.

It belongs to the acetylglutamate kinase family. ArgB subfamily.

It is found in the cytoplasm. It carries out the reaction N-acetyl-L-glutamate + ATP = N-acetyl-L-glutamyl 5-phosphate + ADP. The protein operates within amino-acid biosynthesis; L-arginine biosynthesis; N(2)-acetyl-L-ornithine from L-glutamate: step 2/4. Catalyzes the ATP-dependent phosphorylation of N-acetyl-L-glutamate. The polypeptide is Acetylglutamate kinase (Parasynechococcus marenigrum (strain WH8102)).